The primary structure comprises 254 residues: Probable transcriptional regulator ycf27 (254 aa).

Residues 16 to 129 form the Response regulatory domain; that stretch reads KVLIVDDEAS…ELEARIRAVL (114 aa). Aspartate 65 carries the post-translational modification 4-aspartylphosphate. Positions 85–103 form a DNA-binding region, H-T-H motif; that stretch reads DVPIIMLTALGDVADRITG. Residues 144-245 constitute a DNA-binding region (ompR/PhoB-type); the sequence is SGIINFNFLT…ARGTGYLFQR (102 aa).

The protein localises to the plastid. It is found in the chloroplast. Probable promoter-specific protein mediating the interaction between DNA and RNA polymerase. This chain is Probable transcriptional regulator ycf27 (ycf27), found in Guillardia theta (Cryptophyte).